A 303-amino-acid chain; its full sequence is MYYGFDIGGTKIALGVFDSGRQLQWEKRVPTPRDSYDAFLDAVCELVAEADRRFGCKGSVGIGIPGMPETEDGTLYAANVPAASGKPLRADLSARLDRDVRLDNDANCFALSEAWDDEFTQYPLVMGLILGTGVGGGLIFNGKPITGKSYITGEFGHMRLPVDALTMMGLDFPLRRCGCGQHGCIENYLSGRGFAWLYQHYYHQPLQAPEIIALYDQGDEQARAHVERYLDLLAVCLGNILTIVDPDLVVIGGGLSNFPAITTQLAERLPRHLLPVARVPRIERARHGDAGGMRGAAFLHLTD.

Residues 4-11 (GFDIGGTK) and 133-140 (GVGGGLIF) contribute to the ATP site. Zn(2+) is bound by residues histidine 157, cysteine 177, cysteine 179, and cysteine 184.

This sequence belongs to the ROK (NagC/XylR) family. NagK subfamily.

The enzyme catalyses N-acetyl-D-glucosamine + ATP = N-acetyl-D-glucosamine 6-phosphate + ADP + H(+). Its pathway is cell wall biogenesis; peptidoglycan recycling. Catalyzes the phosphorylation of N-acetyl-D-glucosamine (GlcNAc) derived from cell-wall degradation, yielding GlcNAc-6-P. In Escherichia coli O81 (strain ED1a), this protein is N-acetyl-D-glucosamine kinase.